The sequence spans 206 residues: 3-demethoxyubiquinol 3-hydroxylase (206 aa).

E55, E85, H88, E137, E169, and H172 together coordinate Fe cation.

It belongs to the COQ7 family. It depends on Fe cation as a cofactor.

It is found in the cell membrane. The catalysed reaction is a 5-methoxy-2-methyl-3-(all-trans-polyprenyl)benzene-1,4-diol + AH2 + O2 = a 3-demethylubiquinol + A + H2O. It functions in the pathway cofactor biosynthesis; ubiquinone biosynthesis. Catalyzes the hydroxylation of 2-nonaprenyl-3-methyl-6-methoxy-1,4-benzoquinol during ubiquinone biosynthesis. This Azoarcus sp. (strain BH72) protein is 3-demethoxyubiquinol 3-hydroxylase.